We begin with the raw amino-acid sequence, 231 residues long: uncharacterized protein (231 aa).

Residue 10–34 (VVTGAGSGIGEAIATLLHEEGAKVV) coordinates NADP(+). Ser140 contacts substrate. The Proton acceptor role is filled by Tyr153.

This sequence belongs to the short-chain dehydrogenases/reductases (SDR) family.

This is an uncharacterized protein from Staphylococcus aureus (strain COL).